A 67-amino-acid polypeptide reads, in one-letter code: DNA-directed RNA polymerase subunit omega (67 aa).

Belongs to the RNA polymerase subunit omega family. As to quaternary structure, the RNAP catalytic core consists of 2 alpha, 1 beta, 1 beta' and 1 omega subunit. When a sigma factor is associated with the core the holoenzyme is formed, which can initiate transcription.

The enzyme catalyses RNA(n) + a ribonucleoside 5'-triphosphate = RNA(n+1) + diphosphate. Functionally, promotes RNA polymerase assembly. Latches the N- and C-terminal regions of the beta' subunit thereby facilitating its interaction with the beta and alpha subunits. The sequence is that of DNA-directed RNA polymerase subunit omega from Polynucleobacter asymbioticus (strain DSM 18221 / CIP 109841 / QLW-P1DMWA-1) (Polynucleobacter necessarius subsp. asymbioticus).